We begin with the raw amino-acid sequence, 363 residues long: Mitogen-activated protein kinase 12 (363 aa).

Residues 25–309 (YKDLKQVGTG…AAEALAFPFF (285 aa)) enclose the Protein kinase domain. Residues 31–39 (VGTGAYGTV) and Lys-54 contribute to the ATP site. Residue Asp-151 is the Proton acceptor of the active site. Thr-181 is modified (phosphothreonine). The TXY signature appears at 181–183 (TGY). Tyr-183 bears the Phosphotyrosine mark.

It belongs to the protein kinase superfamily. CMGC Ser/Thr protein kinase family. MAP kinase subfamily. It depends on Mg(2+) as a cofactor. In terms of processing, dually phosphorylated on Thr-181 and Tyr-183, which activates the enzyme.

It localises to the cytoplasm. The enzyme catalyses L-seryl-[protein] + ATP = O-phospho-L-seryl-[protein] + ADP + H(+). The catalysed reaction is L-threonyl-[protein] + ATP = O-phospho-L-threonyl-[protein] + ADP + H(+). Activated by threonine and tyrosine phosphorylation. Serine/threonine kinase which acts as an essential component of the MAP kinase signal transduction pathway. MAPK12 is one of the four p38 MAPKs which play an important role in the cascades of cellular responses evoked by extracellular stimuli such as pro-inflammatory cytokines or physical stress leading to direct activation of transcription factors. Accordingly, p38 MAPKs phosphorylate a broad range of proteins and it has been estimated that they may have approximately 200 to 300 substrates each. Some of the targets are downstream kinases such as MAPKAPK2, which are activated through phosphorylation and further phosphorylate additional targets. The chain is Mitogen-activated protein kinase 12 (mapk12) from Danio rerio (Zebrafish).